We begin with the raw amino-acid sequence, 289 residues long: Metal-staphylopine import system permease protein CntC (289 aa).

The next 5 membrane-spanning stretches (helical) occupy residues 13–33, 77–97, 115–135, 194–214, and 249–269; these read AVIA…APLV, LLYV…LGFL, VMLA…FGMG, IAII…GFSF, and IAIV…QIAI. One can recognise an ABC transmembrane type-1 domain in the interval 73 to 262; sequence IRPSLLYVFV…IIVMAFNFLS (190 aa).

This sequence belongs to the binding-protein-dependent transport system permease family. In terms of assembly, the complex is composed of two ATP-binding proteins (CntD and CntF), two transmembrane proteins (CntB and CntC) and a solute-binding protein (CntA).

It is found in the cell membrane. With respect to regulation, nickel/cobalt import is reduced in the presence of zinc. Part of the ABC transporter complex CntABCDF (Opp1) involved in the uptake of metal in complex with the metallophore staphylopine (StP). Involved in the import of divalent metals ions such as nickel, cobalt and zinc. Probably responsible for the translocation of the substrate across the membrane. Plays a major role in nickel/cobalt import in zinc-depleted conditions. Contributes to virulence. Required for full urease activity in vitro. This is Metal-staphylopine import system permease protein CntC from Staphylococcus aureus (strain NCTC 8325 / PS 47).